Reading from the N-terminus, the 819-residue chain is Tegument protein UL47 homolog (819 aa).

Basic residues predominate over residues 1–15 (MQSGHYNRRQSRRQR). Disordered stretches follow at residues 1 to 42 (MQSG…THPP) and 58 to 221 (LNSE…DYFS). The Nuclear localization signal signature appears at 11 to 31 (SRRQRISSNTTDSPRHTHGTR). Polar residues predominate over residues 32–42 (YRSTNWYTHPP). Residues 62–72 (MDQDSSSDASD) show a composition bias toward acidic residues. Residues 82-93 (STYNGSEQNTST) are compositionally biased toward polar residues. Basic and acidic residues predominate over residues 94–109 (SRHENRIFKLTEREAN). 5 repeat units span residues 117–132 (DAID…EAEE), 133–148 (DAID…EAEE), 149–164 (DAID…EAEE), 165–190 (DAID…EAEE), and 191–206 (DAID…AAEE). The tract at residues 117–218 (DAIDDEGEAE…IDDEGEAEED (102 aa)) is 6 X 16 AA approximate tandem repeats. The segment covering 118–219 (AIDDEGEAEE…DDEGEAEEDY (102 aa)) has biased composition (acidic residues). The 1-6; truncated repeat unit spans residues 207–218 (DAIDDEGEAEED). A Nuclear export signal motif is present at residues 785–807 (QPIPSVDLAENLMQYRNEILGLD).

It belongs to the alphaherpesvirinae HHV-1 UL47 family. In terms of assembly, interacts with US3 kinase. Interacts with ORF24 and ORF27; these interactions seem important for efficient virion nuclear egress. Interacts with ORF17/VHS. Interacts with ORF9. Post-translationally, phosphorylated by US3. This phosphorylation is required for proper nuclear localization.

The protein resides in the virion tegument. The protein localises to the host nucleus. It is found in the host cytoplasm. Tegument protein that can bind to various RNA transcripts. Plays a role in the attenuation of selective viral and cellular mRNA degradation by modulating the activity of host shutoff RNase ORF17/VHS. Also plays a role in the primary envelopment of virions in the perinuclear space, probably by interacting with two nuclear egress proteins ORF24 and ORF27. The sequence is that of Tegument protein UL47 homolog from Varicella-zoster virus (strain Dumas) (HHV-3).